An 865-amino-acid chain; its full sequence is Fatty acyl-CoA synthetase and RNA processing-associated kinase 1 (865 aa).

The region spanning 41–313 (YILGSTLGEG…LKQIKKHEWL (273 aa)) is the Protein kinase domain. Residues 47–55 (LGEGEFGKV) and lysine 80 each bind ATP. Aspartate 175 acts as the Proton acceptor in catalysis. Residues 341-398 (KPRRRYGSRPQSSCSTSSLGSRSDKRDSLVIDSTLITFPAPPQESQNHIITRPASIAS) are disordered. Residues 352 to 361 (SSCSTSSLGS) are compositionally biased toward low complexity. Serine 441 carries the phosphoserine modification. Disordered regions lie at residues 480–554 (ISGS…YTTP), 673–733 (TEES…LNEA), and 754–782 (SLYSSMDSKRKPSPPSQRRPKKDDSYQTN). The span at 494 to 538 (STTMQTSKIQPNNMASSQNHQYNKNKTQNSLQSAKNFYRTSSSSH) shows a compositional bias: polar residues. 2 stretches are compositionally biased toward basic and acidic residues: residues 690–708 (EGQESIDKAKTEDTSEKGS) and 724–733 (NHLERSLNEA).

It belongs to the protein kinase superfamily. Ser/Thr protein kinase family. Interacts with FAA3, POL5 and TPA1.

Its subcellular location is the cytoplasm. The catalysed reaction is L-seryl-[protein] + ATP = O-phospho-L-seryl-[protein] + ADP + H(+). It carries out the reaction L-threonyl-[protein] + ATP = O-phospho-L-threonyl-[protein] + ADP + H(+). In terms of biological role, putative serine/threonine-protein kinase that may be involved in rRNA transcription and ribosome biogenesis. The polypeptide is Fatty acyl-CoA synthetase and RNA processing-associated kinase 1 (FRK1) (Saccharomyces cerevisiae (strain ATCC 204508 / S288c) (Baker's yeast)).